Consider the following 35-residue polypeptide: Photosystem II reaction center protein T (35 aa).

A helical transmembrane segment spans residues 3–23 (ALVYTFLLVGTLGIIFFAIFF).

This sequence belongs to the PsbT family. As to quaternary structure, PSII is composed of 1 copy each of membrane proteins PsbA, PsbB, PsbC, PsbD, PsbE, PsbF, PsbH, PsbI, PsbJ, PsbK, PsbL, PsbM, PsbT, PsbY, PsbZ, Psb30/Ycf12, at least 3 peripheral proteins of the oxygen-evolving complex and a large number of cofactors. It forms dimeric complexes.

It is found in the plastid. It localises to the chloroplast thylakoid membrane. Functionally, found at the monomer-monomer interface of the photosystem II (PS II) dimer, plays a role in assembly and dimerization of PSII. PSII is a light-driven water plastoquinone oxidoreductase, using light energy to abstract electrons from H(2)O, generating a proton gradient subsequently used for ATP formation. The protein is Photosystem II reaction center protein T of Marchantia polymorpha (Common liverwort).